We begin with the raw amino-acid sequence, 454 residues long: UDP-N-acetylmuramate--L-alanine ligase (454 aa).

Position 113-119 (113-119 (GSHGKTT)) interacts with ATP.

Belongs to the MurCDEF family.

Its subcellular location is the cytoplasm. It carries out the reaction UDP-N-acetyl-alpha-D-muramate + L-alanine + ATP = UDP-N-acetyl-alpha-D-muramoyl-L-alanine + ADP + phosphate + H(+). The protein operates within cell wall biogenesis; peptidoglycan biosynthesis. Its function is as follows. Cell wall formation. The chain is UDP-N-acetylmuramate--L-alanine ligase from Sulfurihydrogenibium sp. (strain YO3AOP1).